The primary structure comprises 385 residues: MGERKGQNKYYPPDFNPEKHGSLNRYHNSHPLRERARKLSQGILIIRFEMPYNIWCDGCKNHIGMGVRYNAEKKKVGNYYTTPIYRFRMKCHLCVNYIEMQTDPANCDYVIVSGASRKEERWDMEDNEQVLTTEHEKKEKLETDAMFRLEHGEADRSTLKKALPTLSHIQEAQNAWKDDFALNSMLRRHFREKKKAMQEEEEKDQALQAKANLAIPLVPESEDDRRLAALLRLHTLDSYEDKQRMKRTEIIHRSWFPSAQGPSTSSSKASTVLKKLCRGRRPPTGSAGAPGDLGIVRRKSREAPESPQCTADNSLSEEPRGPPGTTPDSKTLQGTAEAPRTSKTLESKRNCSDQALPLGSSQEDLLHPNTPNASLVADYSDSESE.

The segment at 1-26 is disordered; sequence MGERKGQNKYYPPDFNPEKHGSLNRY. A Phosphoserine modification is found at S40. Residues 182–215 adopt a coiled-coil conformation; the sequence is LNSMLRRHFREKKKAMQEEEEKDQALQAKANLAI. Positions 256-385 are disordered; the sequence is FPSAQGPSTS…VADYSDSESE (130 aa). Over residues 260–270 the composition is skewed to polar residues; the sequence is QGPSTSSSKAS. Phosphoserine is present on S306. Composition is skewed to polar residues over residues 307-316 and 359-373; these read PQCTADNSLS and GSSQ…TPNA.

The protein belongs to the CWC16 family.

It localises to the nucleus. In terms of biological role, may be involved in mRNA splicing. The sequence is that of Probable splicing factor YJU2B from Rattus norvegicus (Rat).